The following is a 198-amino-acid chain: Mitrocomin (198 aa).

A propeptide spanning residues 1–8 (MSMGSRYA) is cleaved from the precursor. EF-hand domains lie at 19–54 (KWIA…IICK), 118–147 (DALF…AGIQ), and 148–183 (QSRG…FWYS). Ca(2+) contacts are provided by Asp32, Asn34, Asn36, Gln38, Glu43, Asp125, Asp127, Asn129, Ser131, Glu136, Asp161, Asp163, Asp165, Lys167, and Glu172.

This sequence belongs to the aequorin family.

In terms of biological role, ca(2+)-dependent bioluminescence photoprotein. Displays an emission peak at 470 nm (blue light). Trace amounts of calcium ion trigger the intramolecular oxidation of the chromophore, coelenterazine into coelenteramide and CO(2) with the concomitant emission of light. The polypeptide is Mitrocomin (MI17) (Mitrocoma cellularia (Cross jellyfish)).